The chain runs to 294 residues: UDP-3-O-acyl-N-acetylglucosamine deacetylase (294 aa).

Positions 75, 232, and 236 each coordinate Zn(2+). The Proton donor role is filled by His-259.

Belongs to the LpxC family. Requires Zn(2+) as cofactor.

The catalysed reaction is a UDP-3-O-[(3R)-3-hydroxyacyl]-N-acetyl-alpha-D-glucosamine + H2O = a UDP-3-O-[(3R)-3-hydroxyacyl]-alpha-D-glucosamine + acetate. It functions in the pathway glycolipid biosynthesis; lipid IV(A) biosynthesis; lipid IV(A) from (3R)-3-hydroxytetradecanoyl-[acyl-carrier-protein] and UDP-N-acetyl-alpha-D-glucosamine: step 2/6. In terms of biological role, catalyzes the hydrolysis of UDP-3-O-myristoyl-N-acetylglucosamine to form UDP-3-O-myristoylglucosamine and acetate, the committed step in lipid A biosynthesis. In Sulfurovum sp. (strain NBC37-1), this protein is UDP-3-O-acyl-N-acetylglucosamine deacetylase.